The following is a 370-amino-acid chain: 3-isopropylmalate dehydrogenase (370 aa).

NAD(+) is bound at residue 77 to 90; it reads GPKWDGVPYDARPE. Positions 97, 107, 135, and 226 each coordinate substrate. Mg(2+) contacts are provided by aspartate 226, aspartate 250, and aspartate 254. 290-302 is a binding site for NAD(+); it reads GSAPDIAGKGMAN.

It belongs to the isocitrate and isopropylmalate dehydrogenases family. LeuB type 1 subfamily. In terms of assembly, homodimer. Mg(2+) is required as a cofactor. It depends on Mn(2+) as a cofactor.

It is found in the cytoplasm. The enzyme catalyses (2R,3S)-3-isopropylmalate + NAD(+) = 4-methyl-2-oxopentanoate + CO2 + NADH. Its pathway is amino-acid biosynthesis; L-leucine biosynthesis; L-leucine from 3-methyl-2-oxobutanoate: step 3/4. Catalyzes the oxidation of 3-carboxy-2-hydroxy-4-methylpentanoate (3-isopropylmalate) to 3-carboxy-4-methyl-2-oxopentanoate. The product decarboxylates to 4-methyl-2 oxopentanoate. The chain is 3-isopropylmalate dehydrogenase from Rhodopseudomonas palustris (strain ATCC BAA-98 / CGA009).